A 127-amino-acid polypeptide reads, in one-letter code: Holo-[acyl-carrier-protein] synthase (127 aa).

Mg(2+) is bound by residues D9 and E58.

It belongs to the P-Pant transferase superfamily. AcpS family. Requires Mg(2+) as cofactor.

Its subcellular location is the cytoplasm. It catalyses the reaction apo-[ACP] + CoA = holo-[ACP] + adenosine 3',5'-bisphosphate + H(+). In terms of biological role, transfers the 4'-phosphopantetheine moiety from coenzyme A to a Ser of acyl-carrier-protein. The protein is Holo-[acyl-carrier-protein] synthase of Shewanella sp. (strain MR-7).